A 410-amino-acid polypeptide reads, in one-letter code: Adenosylhomocysteinase (410 aa).

The substrate site is built by Asp-117 and Glu-142. NAD(+) is bound at residue 143-145 (TTT). Residues Lys-172 and Asp-176 each contribute to the substrate site. NAD(+)-binding positions include Asn-177, 206–211 (GYGYCG), Glu-229, 285–287 (AGH), and Asn-332.

This sequence belongs to the adenosylhomocysteinase family. NAD(+) is required as a cofactor.

The protein resides in the cytoplasm. The enzyme catalyses S-adenosyl-L-homocysteine + H2O = L-homocysteine + adenosine. The protein operates within amino-acid biosynthesis; L-homocysteine biosynthesis; L-homocysteine from S-adenosyl-L-homocysteine: step 1/1. In terms of biological role, may play a key role in the regulation of the intracellular concentration of adenosylhomocysteine. This is Adenosylhomocysteinase from Thermoplasma acidophilum (strain ATCC 25905 / DSM 1728 / JCM 9062 / NBRC 15155 / AMRC-C165).